The sequence spans 459 residues: Putrescine aminotransferase (459 aa).

Residues 150–151 and Gln274 each bind pyridoxal 5'-phosphate; that span reads GT. Lys300 carries the post-translational modification N6-(pyridoxal phosphate)lysine. Position 332 (Thr332) interacts with pyridoxal 5'-phosphate.

Belongs to the class-III pyridoxal-phosphate-dependent aminotransferase family. Putrescine aminotransferase subfamily. It depends on pyridoxal 5'-phosphate as a cofactor.

The enzyme catalyses an alkane-alpha,omega-diamine + 2-oxoglutarate = an omega-aminoaldehyde + L-glutamate. The catalysed reaction is putrescine + 2-oxoglutarate = 1-pyrroline + L-glutamate + H2O. It catalyses the reaction cadaverine + 2-oxoglutarate = 5-aminopentanal + L-glutamate. It participates in amine and polyamine degradation; putrescine degradation; 4-aminobutanal from putrescine (transaminase route): step 1/1. In terms of biological role, catalyzes the aminotransferase reaction from putrescine to 2-oxoglutarate, leading to glutamate and 4-aminobutanal, which spontaneously cyclizes to form 1-pyrroline. This is the first step in one of two pathways for putrescine degradation, where putrescine is converted into 4-aminobutanoate (gamma-aminobutyrate or GABA) via 4-aminobutanal. Also functions as a cadaverine transaminase in a a L-lysine degradation pathway to succinate that proceeds via cadaverine, glutarate and L-2-hydroxyglutarate. In Escherichia coli O7:K1 (strain IAI39 / ExPEC), this protein is Putrescine aminotransferase.